A 269-amino-acid polypeptide reads, in one-letter code: Formamidopyrimidine-DNA glycosylase (269 aa).

Residue Pro-2 is the Schiff-base intermediate with DNA of the active site. Residue Glu-3 is the Proton donor of the active site. Lys-57 acts as the Proton donor; for beta-elimination activity in catalysis. Residues His-90, Arg-109, and Lys-150 each contribute to the DNA site. An FPG-type zinc finger spans residues 235–269; sequence QVYGRAGEPCRQCGHPIEIAKHGQRSTFFCRHCQH. Residue Arg-259 is the Proton donor; for delta-elimination activity of the active site.

It belongs to the FPG family. Monomer. Zn(2+) serves as cofactor.

The catalysed reaction is Hydrolysis of DNA containing ring-opened 7-methylguanine residues, releasing 2,6-diamino-4-hydroxy-5-(N-methyl)formamidopyrimidine.. The enzyme catalyses 2'-deoxyribonucleotide-(2'-deoxyribose 5'-phosphate)-2'-deoxyribonucleotide-DNA = a 3'-end 2'-deoxyribonucleotide-(2,3-dehydro-2,3-deoxyribose 5'-phosphate)-DNA + a 5'-end 5'-phospho-2'-deoxyribonucleoside-DNA + H(+). Involved in base excision repair of DNA damaged by oxidation or by mutagenic agents. Acts as a DNA glycosylase that recognizes and removes damaged bases. Has a preference for oxidized purines, such as 7,8-dihydro-8-oxoguanine (8-oxoG). Has AP (apurinic/apyrimidinic) lyase activity and introduces nicks in the DNA strand. Cleaves the DNA backbone by beta-delta elimination to generate a single-strand break at the site of the removed base with both 3'- and 5'-phosphates. The chain is Formamidopyrimidine-DNA glycosylase from Yersinia pseudotuberculosis serotype O:1b (strain IP 31758).